The chain runs to 233 residues: EEF1A lysine methyltransferase 2 (233 aa).

This sequence belongs to the class I-like SAM-binding methyltransferase superfamily. EFM4 family.

The protein resides in the cytoplasm. Its subcellular location is the nucleus. The catalysed reaction is L-lysyl-[protein] + 3 S-adenosyl-L-methionine = N(6),N(6),N(6)-trimethyl-L-lysyl-[protein] + 3 S-adenosyl-L-homocysteine + 3 H(+). Its function is as follows. Protein-lysine methyltransferase that selectively catalyzes the trimethylation of EEF1A at 'Lys-318'. In Danio rerio (Zebrafish), this protein is EEF1A lysine methyltransferase 2.